Here is a 267-residue protein sequence, read N- to C-terminus: 5'-nucleotidase SurE (267 aa).

Positions 14, 15, 45, and 100 each coordinate a divalent metal cation.

Belongs to the SurE nucleotidase family. Requires a divalent metal cation as cofactor.

It is found in the cytoplasm. It catalyses the reaction a ribonucleoside 5'-phosphate + H2O = a ribonucleoside + phosphate. Its function is as follows. Nucleotidase that shows phosphatase activity on nucleoside 5'-monophosphates. In Methanosarcina acetivorans (strain ATCC 35395 / DSM 2834 / JCM 12185 / C2A), this protein is 5'-nucleotidase SurE.